The primary structure comprises 686 residues: tRNA wybutosine-synthesizing protein 4 (686 aa).

Residues 1–22 are disordered; that stretch reads MGPRSRQRRTGTVQSTNDSSSL. A compositionally biased stretch (polar residues) spans 10-22; it reads TGTVQSTNDSSSL. S-adenosyl-L-methionine is bound by residues arginine 59, glycine 89, aspartate 114, 161 to 162, and glutamate 188; that span reads DL.

The protein belongs to the methyltransferase superfamily. LCMT family. In terms of assembly, interacts with RNF144B/IBRDC2.

It catalyses the reaction 7-[(3S)-3-amino-3-carboxypropyl]wyosine(37) in tRNA(Phe) + S-adenosyl-L-methionine = 7-[(3S)-(3-amino-3-methoxycarbonyl)propyl]wyosine(37) in tRNA(Phe) + S-adenosyl-L-homocysteine. The enzyme catalyses 7-[(3S)-(3-amino-3-methoxycarbonyl)propyl]wyosine(37) in tRNA(Phe) + S-adenosyl-L-methionine + CO2 = wybutosine(37) in tRNA(Phe) + S-adenosyl-L-homocysteine + 2 H(+). The protein operates within tRNA modification; wybutosine-tRNA(Phe) biosynthesis. Its function is as follows. Probable S-adenosyl-L-methionine-dependent methyltransferase that acts as a component of the wybutosine biosynthesis pathway. Wybutosine is a hyper modified guanosine with a tricyclic base found at the 3'-position adjacent to the anticodon of eukaryotic phenylalanine tRNA. May methylate the carboxyl group of leucine residues to form alpha-leucine ester residues. The chain is tRNA wybutosine-synthesizing protein 4 (Lcmt2) from Rattus norvegicus (Rat).